The following is a 329-amino-acid chain: Endochitinase A (329 aa).

The signal sequence occupies residues 1-23; that stretch reads MRLCKFTALSSLLFSLLLLSASA. The region spanning 24-65 is the Chitin-binding type-1 domain; it reads EQCGSQAGGARCPSGLCCSKFGWCGNTNDYCGPGNCQSQCPG. 4 disulfides stabilise this stretch: C26–C41, C35–C47, C40–C54, and C59–C63. The residue at position 67 (P67) is a 4-hydroxyproline; partial. 4 positions are modified to 4-hydroxyproline: P69, P71, P72, and P74. P75 is modified (4-hydroxyproline; partial). 3 disulfides stabilise this stretch: C101–C163, C175–C183, and C282–C314. The active-site Proton donor is E145. The propeptide at 323–329 is removed in mature form; it reads GLLVDTM.

Belongs to the glycosyl hydrolase 19 family. Chitinase class I subfamily. In terms of processing, the 4-hydroxyproline residues are not glycosylated in this plant vacuolar protein.

The protein localises to the vacuole. It carries out the reaction Random endo-hydrolysis of N-acetyl-beta-D-glucosaminide (1-&gt;4)-beta-linkages in chitin and chitodextrins.. In terms of biological role, defense against chitin-containing fungal pathogens. This chain is Endochitinase A (CHN48), found in Nicotiana tabacum (Common tobacco).